Reading from the N-terminus, the 434-residue chain is Pancreatic lipase-related protein 2 (434 aa).

A disulfide bridge connects residues cysteine 4 and cysteine 10. The tract at residues 76-88 (IHGFTDSGENSWL) is required for galactolipase activity. A disulfide bond links cysteine 92 and cysteine 103. The Nucleophile role is filled by serine 154. The active-site Charge relay system is the aspartate 178. Residues glutamate 189, arginine 192, aspartate 194, and aspartate 197 each coordinate Ca(2+). An intrachain disulfide couples cysteine 239 to cysteine 245. The segment at 240-244 (KTGIS) is required for galactolipase activity. The active-site Charge relay system is the histidine 247. 2 disulfide bridges follow: cysteine 269–cysteine 280 and cysteine 283–cysteine 288. N-linked (GlcNAc...) asparagine glycosylation occurs at asparagine 318. The 113-residue stretch at 322 to 434 (WRYKVTVTLS…ENVEQTLSPC (113 aa)) folds into the PLAT domain. Cysteine 418 and cysteine 434 are joined by a disulfide.

Belongs to the AB hydrolase superfamily. Lipase family. Pancreas.

Its subcellular location is the secreted. The protein resides in the zymogen granule membrane. It localises to the cell projection. It is found in the neuron projection. It carries out the reaction a triacylglycerol + H2O = a diacylglycerol + a fatty acid + H(+). It catalyses the reaction a 1,2-diacyl-3-O-(beta-D-galactosyl)-sn-glycerol + 2 H2O = 3-beta-D-galactosyl-sn-glycerol + 2 a fatty acid + 2 H(+). The enzyme catalyses 1,2,3-tri-(9Z-octadecenoyl)-glycerol + H2O = di-(9Z)-octadecenoylglycerol + (9Z)-octadecenoate + H(+). The catalysed reaction is di-(9Z)-octadecenoylglycerol + H2O = (9Z-octadecenoyl)-glycerol + (9Z)-octadecenoate + H(+). It carries out the reaction (9Z-octadecenoyl)-glycerol + H2O = glycerol + (9Z)-octadecenoate + H(+). It catalyses the reaction 1-(9Z-octadecenoyl)-glycerol + H2O = glycerol + (9Z)-octadecenoate + H(+). The enzyme catalyses 1,2,3-tripropanoylglycerol + H2O = dipropanoylglycerol + propanoate + H(+). The catalysed reaction is 1,2,3-tributanoylglycerol + H2O = dibutanoylglycerol + butanoate + H(+). It carries out the reaction 1,2,3-trioctanoylglycerol + H2O = dioctanoylglycerol + octanoate + H(+). It catalyses the reaction 1,2-didecanoylglycerol + H2O = decanoylglycerol + decanoate + H(+). The enzyme catalyses long chain 1,2-diacyl-3-O-beta-D-galactosyl-sn-glycerol + H2O = long chain acyl-3-O-beta-D-galactosyl-sn-glycerol + a fatty acid + H(+). The catalysed reaction is 1,2-dioctanoyl-3-O-beta-D-galactosyl-sn-glycerol + H2O = octanoyl-3-(beta-D-galactosyl)-sn-glycerol + octanoate + H(+). It carries out the reaction 1,2-didodecanoyl-3-beta-D-galactosyl-sn-glycerol + H2O = dodecanoyl-3-beta-D-galactosyl-sn-glycerol + dodecanoate + H(+). It catalyses the reaction 1-beta-D-galactosyl-2,3-didodecanoyl-sn-glycerol + H2O = 1-beta-D-galactosyl-dodecanoyl-sn-glycerol + dodecanoate + H(+). The enzyme catalyses a 1,2-diacyl-3-O-[alpha-D-galactosyl-(1-&gt;6)-beta-D-galactosyl]-sn-glycerol + H2O = acyl-3-O-[alpha-D-galactosyl-(1-&gt;6)-beta-D-galactosyl]-sn-glycerol + a fatty acid + H(+). The catalysed reaction is long chain 1,2-diacyl-3-O-[alpha-D-galactosyl-(1-&gt;6)-beta-D-galactosyl]-sn-glycerol + H2O = long chain acyl-3-O-[alpha-D-galactosyl-(1-&gt;6)-beta-D-galactosyl]-sn-glycerol + a fatty acid + H(+). It carries out the reaction 1,2-dioctanoyl-3-O-[alpha-D-galactosyl-(1-&gt;6)-beta-D-galactosyl]-sn-glycerol + H2O = octanoyl-3-O-[alpha-D-galactosyl-(1-&gt;6)-beta-D-galactosyl]-sn-glycerol + octanoate + H(+). It catalyses the reaction 1,2-didodecanoyl-3-O-[alpha-D-galactosyl-(1-&gt;6)-beta-D-galactosyl]-sn-glycerol + H2O = dodecanoyl-3-O-[alpha-D-galactosyl-(1-&gt;6)-beta-D-galactosyl]-sn-glycerol + dodecanoate + H(+). The enzyme catalyses a 1,2-diacyl-sn-glycero-3-phosphocholine + H2O = a monoacyl-sn-glycero-3-phosphocholine + a fatty acid + H(+). It participates in glycerolipid metabolism; triacylglycerol degradation. Its pathway is glycolipid metabolism. CLPS stimulates triacylglycerol lipase activity. Not inhibited by bile salts. In terms of biological role, lipase that primarily hydrolyzes triglycerides and galactosylglycerides. In neonates, may play a major role in pancreatic digestion of dietary fats such as milk fat globules enriched in long-chain triglycerides. Hydrolyzes short-, medium- and long-chain fatty acyls in triglycerides without apparent positional specificity. Can completely deacylate triacylglycerols. When the liver matures and bile salt synthesis increases, likely functions mainly as a galactolipase and monoacylglycerol lipase. Hydrolyzes monogalactosyldiglycerols (MGDG) and digalactosyldiacylglycerols (DGDG) present in a plant-based diet, releasing long-chain polyunsaturated fatty acids. Hydrolyzes medium- and long-chain fatty acyls in galactolipids. May act together with LIPF to hydrolyze partially digested triglycerides. Hydrolyzes long-chain monoglycerides with high efficiency. In cytotoxic T cells, contributes to perforin-dependent cell lysis, but is unlikely to mediate direct cytotoxicity. Also has low phospholipase activity. In neurons, required for the localization of the phospholipid 1-oleoyl-2-palmitoyl-PC (OPPC) to neurite tips through acyl chain remodeling of membrane phospholipids. The resulting OPPC-rich lipid membrane domain recruits the t-SNARE protein STX4 by selectively interacting with the STX4 transmembrane domain and this promotes surface expression of the dopamine transporter SLC6A3/DAT at neurite tips by facilitating fusion of SLC6A3-containing transport vesicles with the plasma membrane. The polypeptide is Pancreatic lipase-related protein 2 (Cavia porcellus (Guinea pig)).